Here is a 413-residue protein sequence, read N- to C-terminus: Histone acetyltransferase type B catalytic subunit (413 aa).

Interaction with histone H4 N-terminus regions lie at residues 51 to 53 (DAE) and 209 to 211 (YNY). Acetyl-CoA contacts are provided by residues 234 to 236 (FII) and 241 to 247 (QGQGLGQ). E269 serves as the catalytic Proton donor/acceptor.

This sequence belongs to the HAT1 family. As to quaternary structure, component of the HAT-B complex composed of at least HAT1 and HAT2. The HAT-B complex binds to histone H4 tail.

The protein localises to the cytoplasm. Its subcellular location is the nucleus. The catalysed reaction is L-lysyl-[protein] + acetyl-CoA = N(6)-acetyl-L-lysyl-[protein] + CoA + H(+). Its function is as follows. Catalytic component of the histone acetylase B (HAT-B) complex. Acetylates 'Lys-14' of histone H4 which is required for telomeric silencing. Has intrinsic substrate specificity that modifies lysine in recognition sequence GXGKXG. Involved in DNA double-strand break repair. This Candida albicans (strain SC5314 / ATCC MYA-2876) (Yeast) protein is Histone acetyltransferase type B catalytic subunit (HAT1).